Here is a 279-residue protein sequence, read N- to C-terminus: Ribosomal RNA small subunit methyltransferase A (279 aa).

Residues L42, G67, E88, D113, and N129 each contribute to the S-adenosyl-L-methionine site.

It belongs to the class I-like SAM-binding methyltransferase superfamily. rRNA adenine N(6)-methyltransferase family. RsmA subfamily.

Its subcellular location is the cytoplasm. It catalyses the reaction adenosine(1518)/adenosine(1519) in 16S rRNA + 4 S-adenosyl-L-methionine = N(6)-dimethyladenosine(1518)/N(6)-dimethyladenosine(1519) in 16S rRNA + 4 S-adenosyl-L-homocysteine + 4 H(+). Specifically dimethylates two adjacent adenosines (A1518 and A1519) in the loop of a conserved hairpin near the 3'-end of 16S rRNA in the 30S particle. May play a critical role in biogenesis of 30S subunits. The chain is Ribosomal RNA small subunit methyltransferase A from Thermotoga maritima (strain ATCC 43589 / DSM 3109 / JCM 10099 / NBRC 100826 / MSB8).